Reading from the N-terminus, the 95-residue chain is Aspartyl/glutamyl-tRNA(Asn/Gln) amidotransferase subunit C (95 aa).

It belongs to the GatC family. As to quaternary structure, heterotrimer of A, B and C subunits.

The enzyme catalyses L-glutamyl-tRNA(Gln) + L-glutamine + ATP + H2O = L-glutaminyl-tRNA(Gln) + L-glutamate + ADP + phosphate + H(+). It catalyses the reaction L-aspartyl-tRNA(Asn) + L-glutamine + ATP + H2O = L-asparaginyl-tRNA(Asn) + L-glutamate + ADP + phosphate + 2 H(+). Its function is as follows. Allows the formation of correctly charged Asn-tRNA(Asn) or Gln-tRNA(Gln) through the transamidation of misacylated Asp-tRNA(Asn) or Glu-tRNA(Gln) in organisms which lack either or both of asparaginyl-tRNA or glutaminyl-tRNA synthetases. The reaction takes place in the presence of glutamine and ATP through an activated phospho-Asp-tRNA(Asn) or phospho-Glu-tRNA(Gln). The protein is Aspartyl/glutamyl-tRNA(Asn/Gln) amidotransferase subunit C of Rhodopseudomonas palustris (strain BisA53).